Reading from the N-terminus, the 217-residue chain is Small ribosomal subunit protein uS3c (217 aa).

A KH type-2 domain is found at 47-119 (VRTHIKSSSN…KLHIAIEKVA (73 aa)).

The protein belongs to the universal ribosomal protein uS3 family. Part of the 30S ribosomal subunit.

It is found in the plastid. It localises to the chloroplast. This is Small ribosomal subunit protein uS3c (rps3) from Pinus koraiensis (Korean pine).